The following is a 60-amino-acid chain: Mastoparan-D (60 aa).

The first 27 residues, methionine 1–alanine 27, serve as a signal peptide directing secretion. AXPX repeat units lie at residues alanine 27–isoleucine 30, alanine 31–valine 34, alanine 35–asparagine 38, and alanine 41–glutamate 44. Positions aspartate 28 to alanine 45 are excised as a propeptide. Residue leucine 59 is modified to Leucine amide.

The protein belongs to the MCD family. Mastoparan subfamily. As to expression, expressed by the venom gland.

The protein resides in the secreted. It localises to the target cell membrane. Antimicrobial and mast cell degranulating peptide. Has broad spectrum antibacterial activity against both Gram-positive and Gram-negative bacteria (S.aureus MIC=24-32 ug/ml, S.xylosus MIC=2 ug/ml, S.alactolyticus MIC=16 ug/ml, C.koseri MIC=4 ug/ml, E.coli MIC=8 ug/ml, K.pneumoniae MIC=32 ug/ml, P.aerugiosa MIC=128 ug/ml, S.choleraesuis MIC=16 ug/ml, S.typhimurium MIC=32 ug/ml, V.parahamelytics MIC=32 ug/ml). Affects membrane permeability of E.coli. Shows hemolytic activities on sheep, chicken and human erythrocytes. Its mast cell degranulation activity may be related to the activation of G-protein coupled receptors in mast cells as well as interaction with other proteins located in cell endosomal membranes in the mast cells. This chain is Mastoparan-D, found in Vespa ducalis (Black-tailed hornet).